We begin with the raw amino-acid sequence, 210 residues long: Somatotropin (210 aa).

The first 23 residues, 1–23, serve as a signal peptide directing secretion; the sequence is MARVLVLLSVVLVSLLVNQGRAS. His38 contributes to the Zn(2+) binding site. A disulfide bridge links Cys71 with Cys183. Glu192 lines the Zn(2+) pocket. Cys200 and Cys208 form a disulfide bridge.

This sequence belongs to the somatotropin/prolactin family.

The protein localises to the secreted. Growth hormone plays an important role in growth control. The sequence is that of Somatotropin (gh) from Cyprinus carpio (Common carp).